The sequence spans 501 residues: Glycerol kinase (501 aa).

Thr-16 provides a ligand contact to ADP. Residues Thr-16, Thr-17, and Ser-18 each coordinate ATP. Thr-16 contributes to the sn-glycerol 3-phosphate binding site. Residue Arg-20 coordinates ADP. The sn-glycerol 3-phosphate site is built by Arg-84, Glu-85, Tyr-135, and Asp-242. Residues Arg-84, Glu-85, Tyr-135, Asp-242, and Gln-243 each coordinate glycerol. ADP-binding residues include Thr-264 and Gly-307. The ATP site is built by Thr-264, Gly-307, Gln-311, and Gly-408. Gly-408 lines the ADP pocket.

It belongs to the FGGY kinase family.

The enzyme catalyses glycerol + ATP = sn-glycerol 3-phosphate + ADP + H(+). It participates in polyol metabolism; glycerol degradation via glycerol kinase pathway; sn-glycerol 3-phosphate from glycerol: step 1/1. Key enzyme in the regulation of glycerol uptake and metabolism. Catalyzes the phosphorylation of glycerol to yield sn-glycerol 3-phosphate. In Saccharolobus islandicus (strain M.14.25 / Kamchatka #1) (Sulfolobus islandicus), this protein is Glycerol kinase.